Here is a 276-residue protein sequence, read N- to C-terminus: Tryptase beta-2 (276 aa).

A signal peptide spans 1-21; sequence MLKRRLLLLWALSLLASLVYS. Residues 22 to 31 constitute a propeptide, activation peptide; the sequence is APRPANQRVG. In terms of domain architecture, Peptidase S1 spans 32 to 273; the sequence is IVGGHEASES…YLDWIHRYVP (242 aa). Cysteine 60 and cysteine 76 are disulfide-bonded. The active-site Charge relay system is the histidine 75. At tyrosine 98 the chain carries Phosphotyrosine. The active-site Charge relay system is aspartate 122. A glycan (N-linked (GlcNAc...) asparagine) is linked at asparagine 133. 3 disulfide bridges follow: cysteine 156-cysteine 231, cysteine 189-cysteine 212, and cysteine 221-cysteine 249. Catalysis depends on serine 225, which acts as the Charge relay system.

It belongs to the peptidase S1 family. Tryptase subfamily. As to quaternary structure, homotetramer. The active tetramer is converted to inactive monomers at neutral and acidic pH in the absence of heparin. Low concentrations of inactive monomers become active monomers at pH 6.0 in the presence of heparin. When the concentration of active monomers is higher, they convert to active monomers and then to active tetramers. These monomers are active and functionally distinct from the tetrameric enzyme. In contrast to the hidden active sites in the tetrameric form, the active site of the monomeric form is accessible for macromolecular proteins and inhibitors, e.g. fibrinogen which is a substrate for the monomeric but not for the tetrameric form. The monomeric form forms a complex with SERPINB6. As to expression, during embryogenesis, detected primarily in skin.

It is found in the secreted. The catalysed reaction is Preferential cleavage: Arg-|-Xaa, Lys-|-Xaa, but with more restricted specificity than trypsin.. Functionally, tryptase is the major neutral protease present in mast cells and is secreted upon the coupled activation-degranulation response of this cell type. Plays a role in innate immunity. This is Tryptase beta-2 (Tpsb2) from Mus musculus (Mouse).